We begin with the raw amino-acid sequence, 443 residues long: Xaa-Pro dipeptidase (443 aa).

Positions 241, 252, 333, 378, and 417 each coordinate Mn(2+).

Belongs to the peptidase M24B family. Bacterial-type prolidase subfamily. Requires Mn(2+) as cofactor.

It catalyses the reaction Xaa-L-Pro dipeptide + H2O = an L-alpha-amino acid + L-proline. Functionally, splits dipeptides with a prolyl residue in the C-terminal position. The protein is Xaa-Pro dipeptidase of Actinobacillus pleuropneumoniae serotype 5b (strain L20).